The following is a 496-amino-acid chain: Probable histidine ammonia-lyase (496 aa).

Positions 141-143 (ASG) form a cross-link, 5-imidazolinone (Ala-Gly). At Ser-142 the chain carries 2,3-didehydroalanine (Ser).

The protein belongs to the PAL/histidase family. In terms of processing, contains an active site 4-methylidene-imidazol-5-one (MIO), which is formed autocatalytically by cyclization and dehydration of residues Ala-Ser-Gly.

Its subcellular location is the cytoplasm. It catalyses the reaction L-histidine = trans-urocanate + NH4(+). It functions in the pathway amino-acid degradation; L-histidine degradation into L-glutamate; N-formimidoyl-L-glutamate from L-histidine: step 1/3. The sequence is that of Probable histidine ammonia-lyase from Thermoplasma acidophilum (strain ATCC 25905 / DSM 1728 / JCM 9062 / NBRC 15155 / AMRC-C165).